A 70-amino-acid polypeptide reads, in one-letter code: Large ribosomal subunit protein uL29 (70 aa).

Belongs to the universal ribosomal protein uL29 family.

The polypeptide is Large ribosomal subunit protein uL29 (Thermosynechococcus vestitus (strain NIES-2133 / IAM M-273 / BP-1)).